The sequence spans 287 residues: AA14 family lytic polysaccharide monooxygenase A (287 aa).

An N-terminal signal peptide occupies residues 1-18 (MLRILTLSILATSKLASA). 3 N-linked (GlcNAc...) asparagine glycosylation sites follow: Asn33, Asn83, and Asn137. Intrachain disulfides connect Cys188/Cys193, Cys195/Cys216, and Cys236/Cys243. An N-linked (GlcNAc...) asparagine glycan is attached at Asn238.

The protein belongs to the polysaccharide monooxygenase AA14 family. Requires Cu(2+) as cofactor.

It is found in the secreted. Lytic polysaccharide monooxygenase (LPMO) that has a broad substrate specificity with strong oxidative activity on pure amorphous cellulose and xyloglucan and plays as a bifunctional enzyme to decompose some specific network structures formed between cellulose and hemicellulose in the plant cell walls. Catalysis by LPMOs requires the reduction of the active-site copper from Cu(II) to Cu(I) by a reducing agent and H(2)O(2) or O(2) as a cosubstrate. Simultaneously oxidizes cellulose, xylan and xyloglucan in natural hemi/cellulosic substrate such as fibrillated eucalyptus pulp, and releases native and oxidized cello-oligosaccharides, xylo-oligosaccharides and xyloglucan oligosaccharides from this substrate. The cellulolytic/hemicellulolytic activity becomes weaker as the contents of xylan increase in the alkaline-extracted hemi/cellulosic substrates. The protein is AA14 family lytic polysaccharide monooxygenase A of Talaromyces rugulosus (Penicillium rugulosum).